The following is a 103-amino-acid chain: ATP-dependent Clp protease adapter protein ClpS (103 aa).

Belongs to the ClpS family. As to quaternary structure, binds to the N-terminal domain of the chaperone ClpA.

Involved in the modulation of the specificity of the ClpAP-mediated ATP-dependent protein degradation. This is ATP-dependent Clp protease adapter protein ClpS from Nitrosomonas eutropha (strain DSM 101675 / C91 / Nm57).